The chain runs to 860 residues: Leucine--tRNA ligase (860 aa).

The 'HIGH' region signature appears at 42-52 (PYPSGRLHMGH). Positions 619–623 (KMSKS) match the 'KMSKS' region motif. K622 provides a ligand contact to ATP.

This sequence belongs to the class-I aminoacyl-tRNA synthetase family.

The protein resides in the cytoplasm. The catalysed reaction is tRNA(Leu) + L-leucine + ATP = L-leucyl-tRNA(Leu) + AMP + diphosphate. The polypeptide is Leucine--tRNA ligase (Escherichia coli O81 (strain ED1a)).